A 570-amino-acid chain; its full sequence is Glycine--tRNA ligase (570 aa).

Positions 95 and 159 each coordinate substrate. ATP-binding positions include 191–193 (RNE), 201–206 (IRLREF), 312–313 (EV), and 426–429 (GLDR). Residue 206-210 (FNQAE) coordinates substrate. 422-426 (EPSFG) is a binding site for substrate.

The protein belongs to the class-II aminoacyl-tRNA synthetase family.

Its subcellular location is the cytoplasm. It catalyses the reaction tRNA(Gly) + glycine + ATP = glycyl-tRNA(Gly) + AMP + diphosphate. Its function is as follows. Catalyzes the attachment of glycine to tRNA(Gly). The sequence is that of Glycine--tRNA ligase from Archaeoglobus fulgidus (strain ATCC 49558 / DSM 4304 / JCM 9628 / NBRC 100126 / VC-16).